Here is a 117-residue protein sequence, read N- to C-terminus: Large ribosomal subunit protein bL19 (117 aa).

Belongs to the bacterial ribosomal protein bL19 family.

In terms of biological role, this protein is located at the 30S-50S ribosomal subunit interface and may play a role in the structure and function of the aminoacyl-tRNA binding site. The sequence is that of Large ribosomal subunit protein bL19 from Vibrio cholerae serotype O1 (strain ATCC 39541 / Classical Ogawa 395 / O395).